A 161-amino-acid polypeptide reads, in one-letter code: SsrA-binding protein (161 aa).

The protein belongs to the SmpB family.

It localises to the cytoplasm. Required for rescue of stalled ribosomes mediated by trans-translation. Binds to transfer-messenger RNA (tmRNA), required for stable association of tmRNA with ribosomes. tmRNA and SmpB together mimic tRNA shape, replacing the anticodon stem-loop with SmpB. tmRNA is encoded by the ssrA gene; the 2 termini fold to resemble tRNA(Ala) and it encodes a 'tag peptide', a short internal open reading frame. During trans-translation Ala-aminoacylated tmRNA acts like a tRNA, entering the A-site of stalled ribosomes, displacing the stalled mRNA. The ribosome then switches to translate the ORF on the tmRNA; the nascent peptide is terminated with the 'tag peptide' encoded by the tmRNA and targeted for degradation. The ribosome is freed to recommence translation, which seems to be the essential function of trans-translation. The polypeptide is SsrA-binding protein (Desulforamulus reducens (strain ATCC BAA-1160 / DSM 100696 / MI-1) (Desulfotomaculum reducens)).